A 256-amino-acid chain; its full sequence is Nuclear shuttle protein (256 aa).

The Bipartite nuclear localization signal motif lies at 18 to 39 (NITNRYPIKRKYVAGHTRPCVR). The Nuclear localization signal motif lies at 81–96 (SRGPSGDGRSRDYIKL). Residues 150–187 (ELFGPYSACYVNLRLLNNQQHRYRVLHSVKRFVSSSGD) form an interaction with Arabidopsis thaliana NSI protein region.

The protein belongs to the begomovirus nuclear shuttle protein family. As to quaternary structure, binds to single-stranded and double-stranded viral DNA. Interacts with the host nuclear shuttle interacting (NSI) protein. This interaction may allow NSP to recruit NSI monomers to the viral genome and thus regulate nuclear export of viral genome by NSP.

Its subcellular location is the host nucleus. It is found in the host cytoplasm. It localises to the host cell membrane. Its function is as follows. Binds to the genomic viral ssDNA, shuttles it into and out of the cell nucleus. Begomoviruses use 2 proteins to transport their DNA from cell to cell. The nuclear shuttle protein (NSP) shuttles it between nucleus and cytoplasm and the movement protein (MP) probably transports the DNA-NSP complex to the cell periphery and facilitates movement across the cell wall. The protein is Nuclear shuttle protein of Hewittia sublobata (Coralbush).